Consider the following 394-residue polypeptide: MSKEKFERVKPHVNVGTIGHVDHGKTTLTAAICTTLAKVYGGAARDFASIDNAPEERERGITISTSHVEYDTPARHYAHVDCPGHADYVKNMITGAAQMDGGILVVAATDGPMPQTREHILLGRQVGIPYIIVFMNKCDMVDDEELLELVEMEVRELLSEYDFPGDDLPVIQGSALGALNGEEQWEAKIIELAEALDTYIPEPERAIDLPFLMPIEDVFSIQGRGTVVTGRIERGILKVGDEVAIVGIKDTTTTTCTGVEMFRKLLDEGRAGENVGALLRGTKRDEVERGQVLAKPGSITPHTKFESEVYVLSKDEGGRHTPFFKGYRPQFYFRTTDVTGDISLPEGVEMVMPGDNIQMVVELISPIAMDEGLRFAIREGGRTVGAGVVAKIFA.

In terms of domain architecture, tr-type G spans 10-204 (KPHVNVGTIG…ALDTYIPEPE (195 aa)). The tract at residues 19–26 (GHVDHGKT) is G1. 19 to 26 (GHVDHGKT) contacts GTP. A Mg(2+)-binding site is contributed by threonine 26. Residues 60-64 (GITIS) form a G2 region. The tract at residues 81 to 84 (DCPG) is G3. GTP is bound by residues 81–85 (DCPGH) and 136–139 (NKCD). The segment at 136 to 139 (NKCD) is G4. Positions 174–176 (SAL) are G5.

The protein belongs to the TRAFAC class translation factor GTPase superfamily. Classic translation factor GTPase family. EF-Tu/EF-1A subfamily. As to quaternary structure, monomer.

Its subcellular location is the cytoplasm. It carries out the reaction GTP + H2O = GDP + phosphate + H(+). Its function is as follows. GTP hydrolase that promotes the GTP-dependent binding of aminoacyl-tRNA to the A-site of ribosomes during protein biosynthesis. In Vibrio vulnificus (strain CMCP6), this protein is Elongation factor Tu 2.